A 1238-amino-acid polypeptide reads, in one-letter code: MSFFLGQILEKMGSIDKDIRFMATHDLANELEKDTFKMDPTYENKIVTKLLALTADSANNVQENVVKCLGLLIKRVKDSQATEIIDTLSKNILEESNKEELVEISGIGLKTIITNLPSEGSSISTLVIKNLVPKLLIGIDSEKLKDKNEIKMSCLDILNDLLQKYGSFMIGDLENIQKVVLPKLNATRPAIRKRAILCLANIAFPSPDNLFNSLLDYIIKSIEEAKKPDHISTLIQAIGAICKSSGYRLGKYLPKVMPHVLNYCDNNKFEQNDELRENCLLCFEAIIEKCQKDVTPYIGEIITLCTKYIKFDPNYSDDGEGEEDGDEEEEEMETSGDNDEEQEEEEEEEDLSDDDDISWKIRRSSCKTLCAIISTRPELLVELYQKVAPVLYNRFKEREENVRLDIFTTFVLLLKQLNKKLANPQAKEVLKQQVPKLVQSISKSLIDKSIRTRVGAIALLKELVMIIPGSLTGQVSQIVNGINLSLSEKNTNSNLKIEALVLLKLLLINEPAQSFQSHITSLSTHIVKCINDSYYRIASEALRVCQEFVIVFNKIRSSTDCKPIISNLFAANFVQLKAQDIDQEVKEAAISSIGTIITLFGNEIQSELQPCLSILLERLDNELTRVVTVKVLSRIINSSINIDLSSILPSAIKLLSTFLRKNNRVLKQSSLIALNDIVKVCPNLLPSSLLTGILTEMATLINESDLQITHLAFVFIQNLLKNYSEKHQAATLVNEKCIPPTLALLKSSLLQGVALESLLSLFATIVQLDEPGMKYEQLLTLLFNTAADIKQPVTRQSFHSISQCIAVITVNTTPALRKQTIHNLICNLSSVNEPLVLLSLSCLGEIGRRIDIHENENLQESVYKTFEANNEEIKQVAALCLGDIAVCSLQSYLPFILEQIKNQPKKQYLLLHTLRETIVKLSHTDEGIKTIHPFLQSILPLLFDNCVNEEEGTRNIVAECLGKLSMIEPNEIIPKLVEKIKSPSPLERSTIVTSIKFSIMENKEVVDQYLAPNISQFLSLLHDGDLIVRRSALLSLNYIAHNKPNLIRNDLSVYLPILYNNAKIKPELIREVDLGPFKHKVDDGIEIRKTAFECMYTLLDTSIDKIDVAPFIVSLCDGLKDTQYDIKLLCHLMIIRLANSNGAALLENITLLLEPLRVILMTKVNETAVKQQIERNEECIRSALRAVASISRIPNSDSIVKFEEFVKNTIRTTPLAAQFNSILSEDTMSNQDSMDTSN.

HEAT repeat units lie at residues 41–78, 126–167, 171–208, 210–247, and 251–292; these read TYEN…RVKD, LVIK…KYGS, GDLE…PSPD, LFNS…SSGY, and KYLP…KCQK. The disordered stretch occupies residues 315 to 354; the sequence is YSDDGEGEEDGDEEEEEMETSGDNDEEQEEEEEEEDLSDD. HEAT repeat units follow at residues 382–419, 432–469, 603–641, 646–683, 688–725, 853–890, 933–966, 967–1004, and 1008–1045; these read ELYQ…QLNK, QQVP…IIPG, EIQS…SSIN, SILP…VCPN, SLLT…NYSE, HENE…CSLQ, PFLQ…KLSM, IEPN…ENKE, and QYLA…NKPN.

The protein belongs to the CAND family.

It localises to the nucleus. Functionally, key assembly factor of SCF (SKP1-CUL1-F-box protein) E3 ubiquitin ligase complexes that promotes the exchange of the substrate-recognition F-box subunit in SCF complexes, thereby playing a key role in the cellular repertoire of SCF complexes. Acts as a F-box protein exchange factor. This Dictyostelium discoideum (Social amoeba) protein is Cullin-associated NEDD8-dissociated protein 1 (cand1).